The following is a 393-amino-acid chain: NAD(P)H-quinone oxidoreductase subunit H, chloroplastic (393 aa).

Belongs to the complex I 49 kDa subunit family. As to quaternary structure, NDH is composed of at least 16 different subunits, 5 of which are encoded in the nucleus.

It is found in the plastid. The protein resides in the chloroplast thylakoid membrane. It carries out the reaction a plastoquinone + NADH + (n+1) H(+)(in) = a plastoquinol + NAD(+) + n H(+)(out). The catalysed reaction is a plastoquinone + NADPH + (n+1) H(+)(in) = a plastoquinol + NADP(+) + n H(+)(out). Functionally, NDH shuttles electrons from NAD(P)H:plastoquinone, via FMN and iron-sulfur (Fe-S) centers, to quinones in the photosynthetic chain and possibly in a chloroplast respiratory chain. The immediate electron acceptor for the enzyme in this species is believed to be plastoquinone. Couples the redox reaction to proton translocation, and thus conserves the redox energy in a proton gradient. This Crucihimalaya wallichii (Rock-cress) protein is NAD(P)H-quinone oxidoreductase subunit H, chloroplastic.